The following is a 242-amino-acid chain: C-reactive protein 3.3 (242 aa).

The N-terminal stretch at 1–24 (MKTFHGPTCGTAVSLCLLLFLTSA) is a signal peptide. One can recognise a Pentraxin (PTX) domain in the interval 30–241 (ITSKVKFPPS…GVVLSPNEIC (212 aa)). Residues threonine 60 and tyrosine 63 each contribute to the phosphocholine site. 2 disulfides stabilise this stretch: cysteine 62–cysteine 125 and cysteine 112–cysteine 144. Ca(2+) contacts are provided by aspartate 85 and asparagine 86. N-linked (GlcNAc...) asparagine glycosylation occurs at asparagine 147. Ca(2+) is bound by residues glutamine 169, aspartate 170, and glutamine 180. Cysteine 207 and cysteine 241 form a disulfide bridge.

It belongs to the pentraxin family. As to quaternary structure, homopentamer. Pentraxin (or pentaxin) have a discoid arrangement of 5 non-covalently bound subunits. Requires Ca(2+) as cofactor.

It is found in the secreted. In terms of biological role, might serve the role of immunoglobulins. In Limulus polyphemus (Atlantic horseshoe crab), this protein is C-reactive protein 3.3.